Consider the following 96-residue polypeptide: Co-chaperonin GroES (96 aa).

Belongs to the GroES chaperonin family. In terms of assembly, heptamer of 7 subunits arranged in a ring. Interacts with the chaperonin GroEL.

The protein resides in the cytoplasm. Its function is as follows. Together with the chaperonin GroEL, plays an essential role in assisting protein folding. The GroEL-GroES system forms a nano-cage that allows encapsulation of the non-native substrate proteins and provides a physical environment optimized to promote and accelerate protein folding. GroES binds to the apical surface of the GroEL ring, thereby capping the opening of the GroEL channel. The polypeptide is Co-chaperonin GroES (Actinobacillus pleuropneumoniae serotype 5b (strain L20)).